We begin with the raw amino-acid sequence, 657 residues long: Probable potassium transport system protein Kup (657 aa).

12 consecutive transmembrane segments (helical) span residues 14-34 (IGGL…SPLY), 47-67 (ADIV…QTTI), 96-116 (IQWL…DGII), 140-160 (TIVY…QFGT), 166-186 (FFAP…FIQI), 201-221 (AYHL…VFLC), 242-262 (ISWI…AAYL), 283-303 (LIMP…AAVI), 340-360 (LYIP…VLHF), 371-391 (GLAI…YLIM), 396-416 (LYFM…FLIA), and 425-445 (GYVT…WYLA).

It belongs to the HAK/KUP transporter (TC 2.A.72) family.

It is found in the cell inner membrane. The enzyme catalyses K(+)(in) + H(+)(in) = K(+)(out) + H(+)(out). Functionally, transport of potassium into the cell. Likely operates as a K(+):H(+) symporter. The protein is Probable potassium transport system protein Kup of Flavobacterium johnsoniae (strain ATCC 17061 / DSM 2064 / JCM 8514 / BCRC 14874 / CCUG 350202 / NBRC 14942 / NCIMB 11054 / UW101) (Cytophaga johnsonae).